The chain runs to 342 residues: Dihydroorotate dehydrogenase (quinone) (342 aa).

FMN-binding positions include 60–64 and threonine 84; that span reads AGLDK. Lysine 64 contacts substrate. 109–113 contributes to the substrate binding site; that stretch reads NRMGF. FMN contacts are provided by asparagine 137 and asparagine 170. Asparagine 170 is a binding site for substrate. Residue serine 173 is the Nucleophile of the active site. A substrate-binding site is contributed by asparagine 175. FMN-binding residues include lysine 215 and threonine 243. 244–245 is a substrate binding site; that stretch reads NT. FMN contacts are provided by residues glycine 266, glycine 295, and 316–317; that span reads YS.

The protein belongs to the dihydroorotate dehydrogenase family. Type 2 subfamily. Monomer. FMN is required as a cofactor.

It localises to the cell membrane. It catalyses the reaction (S)-dihydroorotate + a quinone = orotate + a quinol. It functions in the pathway pyrimidine metabolism; UMP biosynthesis via de novo pathway; orotate from (S)-dihydroorotate (quinone route): step 1/1. Functionally, catalyzes the conversion of dihydroorotate to orotate with quinone as electron acceptor. The sequence is that of Dihydroorotate dehydrogenase (quinone) from Nitrosomonas europaea (strain ATCC 19718 / CIP 103999 / KCTC 2705 / NBRC 14298).